A 408-amino-acid polypeptide reads, in one-letter code: UDP-N-acetylglucosamine--dolichyl-phosphate N-acetylglucosaminephosphotransferase (408 aa).

Over 1 to 10 (MWAFPELPMP) the chain is Lumenal. The chain crosses the membrane as a helical span at residues 11 to 38 (LLVNLIGSLMGFVATVTLIPAFRGHFIA). Residues 39–58 (ARLCGQDLNKSSREQIPESQ) are Cytoplasmic-facing. Residues 44–46 (QDL) and Glu-56 each bind UDP-N-acetyl-alpha-D-glucosamine. A helical transmembrane segment spans residues 59-78 (GVISGAVFLIILFCFIPFPF). The Lumenal segment spans residues 79-91 (LNCFVEQQCKAFP). Residues 92–118 (HHEFVALIGALLAICCMIFLGFADDVL) form a helical membrane-spanning segment. Residues 119–121 (NLR) lie on the Cytoplasmic side of the membrane. The chain crosses the membrane as a helical span at residues 122–143 (WRHKLLLPTAASLPLLMVYFTN). Residue Lys-125 participates in dolichyl phosphate binding. Topologically, residues 144–166 (FGNTTIVVPKPLRPILGLHLDLG) are lumenal. N-linked (GlcNAc...) asparagine glycosylation is present at Asn-146. A helical transmembrane segment spans residues 167 to 186 (ILYYVYMGLLAVFCTNAINI). 178-186 (VFCTNAINI) provides a ligand contact to dolichyl phosphate. Residue Asn-185 coordinates Mg(2+). Residues 187–192 (LAGING) lie on the Cytoplasmic side of the membrane. Position 191 (Asn-191) interacts with UDP-N-acetyl-alpha-D-glucosamine. Residues 193–213 (LEAGQSLVISASIIVFNLVEL) traverse the membrane as a helical segment. Over 214 to 218 (DGDYR) the chain is Lumenal. The helical transmembrane segment at 219–242 (DDHIFSLYFMIPFFFTTLGLLYHN) threads the bilayer. At 243-250 (WYPSRVFV) the chain is on the cytoplasmic side. A helical membrane pass occupies residues 251-269 (GDTFCYFAGMTFAVVGILG). Asp-252 serves as a coordination point for Mg(2+). Topologically, residues 270–271 (HF) are lumenal. A helical membrane pass occupies residues 272-293 (SKTMLLFFMPQVFNFLYSLPQL). The Cytoplasmic segment spans residues 294-375 (LHIIPCPRHR…LLLKVFGPMH (82 aa)). 301–303 (RHR) serves as a coordination point for UDP-N-acetyl-alpha-D-glucosamine. Residues 376–400 (ERNLTLLLLLLQVVGSAVTFSIRYQ) form a helical membrane-spanning segment. Residues 401 to 408 (LVRLFYDV) are Lumenal-facing.

It belongs to the glycosyltransferase 4 family. In terms of assembly, homodimer. The cofactor is Mg(2+).

The protein resides in the endoplasmic reticulum membrane. It carries out the reaction a di-trans,poly-cis-dolichyl phosphate + UDP-N-acetyl-alpha-D-glucosamine = an N-acetyl-alpha-D-glucosaminyl-diphospho-di-trans,poly-cis-dolichol + UMP. Its pathway is protein modification; protein glycosylation. With respect to regulation, inhibited by natural nucleoside antibiotic tunicamycin, which acts as a structural analog and competitor of UDP-GlcNAc. Activated by Man-P-Dol. Activated by manganese. Inhibited by diumycin. In terms of biological role, UDP-N-acetylglucosamine--dolichyl-phosphate N-acetylglucosaminephosphotransferase that operates in the biosynthetic pathway of dolichol-linked oligosaccharides, the glycan precursors employed in protein asparagine (N)-glycosylation. The assembly of dolichol-linked oligosaccharides begins on the cytosolic side of the endoplasmic reticulum membrane and finishes in its lumen. The sequential addition of sugars to dolichol pyrophosphate produces dolichol-linked oligosaccharides containing fourteen sugars, including two GlcNAcs, nine mannoses and three glucoses. Once assembled, the oligosaccharide is transferred from the lipid to nascent proteins by oligosaccharyltransferases. Catalyzes the initial step of dolichol-linked oligosaccharide biosynthesis, transfering GlcNAc-1-P from cytosolic UDP-GlcNAc onto the carrier lipid dolichyl phosphate (P-dolichol), yielding GlcNAc-P-P-dolichol embedded in the cytoplasmic leaflet of the endoplasmic reticulum membrane. The protein is UDP-N-acetylglucosamine--dolichyl-phosphate N-acetylglucosaminephosphotransferase of Bos taurus (Bovine).